The following is a 502-amino-acid chain: Lysine--tRNA ligase (502 aa).

Residues E403 and E410 each coordinate Mg(2+).

This sequence belongs to the class-II aminoacyl-tRNA synthetase family. As to quaternary structure, homodimer. Mg(2+) serves as cofactor.

The protein resides in the cytoplasm. The enzyme catalyses tRNA(Lys) + L-lysine + ATP = L-lysyl-tRNA(Lys) + AMP + diphosphate. In Synechococcus sp. (strain CC9605), this protein is Lysine--tRNA ligase.